The primary structure comprises 652 residues: Threonine--tRNA ligase (652 aa).

In terms of domain architecture, TGS spans 1-64 (MPDVIRITFP…HEDGELVIIT (64 aa)). Residues 245 to 542 (DHRKLGKELE…LIEEYKGAFP (298 aa)) are catalytic. Positions 338, 389, and 519 each coordinate Zn(2+).

Belongs to the class-II aminoacyl-tRNA synthetase family. In terms of assembly, homodimer. Requires Zn(2+) as cofactor.

It is found in the cytoplasm. The enzyme catalyses tRNA(Thr) + L-threonine + ATP = L-threonyl-tRNA(Thr) + AMP + diphosphate + H(+). Its function is as follows. Catalyzes the attachment of threonine to tRNA(Thr) in a two-step reaction: L-threonine is first activated by ATP to form Thr-AMP and then transferred to the acceptor end of tRNA(Thr). Also edits incorrectly charged L-seryl-tRNA(Thr). This Geobacillus kaustophilus (strain HTA426) protein is Threonine--tRNA ligase.